A 183-amino-acid polypeptide reads, in one-letter code: Inner membrane-spanning protein YciB (183 aa).

5 consecutive transmembrane segments (helical) span residues 22–42 (IYAATGVLIAATAIQLVITYL), 50–70 (MHLATFAMVTVFGSLTLFFHD), 72–92 (AFIKWKVSIVYALFAIGLIAS), 118–138 (VTWYWVGFFVLCSFANIYIAF), and 148–168 (FKVFGLTALTLINTVITVVYL).

Belongs to the YciB family.

The protein resides in the cell inner membrane. Plays a role in cell envelope biogenesis, maintenance of cell envelope integrity and membrane homeostasis. The sequence is that of Inner membrane-spanning protein YciB from Shewanella frigidimarina (strain NCIMB 400).